Here is a 787-residue protein sequence, read N- to C-terminus: MEPAGERFPEQRQVLILLLLLEVTLAGWEPRRYSVMEETERGSFVANLANDLGLGVGELAERGARVVSEDNEQGLQLDLQTGQLILNEKLDREKLCGPTEPCIMHFQVLLKKPLEVFRAELLVTDINDHSPEFPEREMTLKIPETSSLGTVFPLKKARDLDVGSNNVQNYNISPNSHFHVSTRTRGDGRKYPELVLDTELDREEQAELRLTLTAVDGGSPPRSGTVQILILVLDANDNAPEFVQALYEVQVPENSPVGSLVVKVSARDLDTGTNGEISYSLYYSSQEIDKPFELSSLSGEIRLIKKLDFETMSSYDLDIEASDGGGLSGKCSVSVKVLDVNDNFPELSISSLTSPIPENSPETEVALFRIRDRDSGENGKMICSIQDDVPFKLKPSVENFYRLVTEGALDRETRAEYNITITITDLGTPRLKTEQSITVLVSDVNDNAPAFTQTSYTLFVRENNSPALHIGSVSATDRDSGTNAQVTYSLLPPRDPHLPLTSLVSINTDNGHLFALQSLDYEALQAFEFRVGATDRGFPALSSEALVRVLVLDANDNSPFVLYPLQNGSAPCTELVPRAAEPGYLVTKVVAVDGDSGQNAWLSYQLLKATEPGLFGVWAHNGEVRTARLLSERDVAKHRLVVLVKDNGEPPRSATATLQVLLVDGFSQPYLPLPEAAPAQAQADSLTVYLVVALASVSSLFLFSVFLFVAVRLCRRSRAASVGRCSVPEGPFPGHLVDVSGTGTLSQSYQYEVCLTGGSESNDFKFLKPIFPNIVSQDSRRKSEFLE.

Positions 1–26 are cleaved as a signal peptide; sequence MEPAGERFPEQRQVLILLLLLEVTLA. At 27 to 690 the chain is on the extracellular side; that stretch reads GWEPRRYSVM…AQADSLTVYL (664 aa). 5 consecutive Cadherin domains span residues 35-133, 138-242, 247-347, 352-451, and 456-561; these read VMEE…SPEF, MTLK…APEF, YEVQ…FPEL, LTSP…APAF, and YTLF…SPFV. An N-linked (GlcNAc...) asparagine glycan is attached at asparagine 418. The N-linked (GlcNAc...) asparagine glycan is linked to asparagine 567. The Cadherin 6 domain maps to 568-671; the sequence is GSAPCTELVP…LVDGFSQPYL (104 aa). Residues 691–711 traverse the membrane as a helical segment; it reads VVALASVSSLFLFSVFLFVAV. Over 712 to 787 the chain is Cytoplasmic; that stretch reads RLCRRSRAAS…DSRRKSEFLE (76 aa).

It is found in the cell membrane. In terms of biological role, potential calcium-dependent cell-adhesion protein. May be involved in the establishment and maintenance of specific neuronal connections in the brain. The polypeptide is Protocadherin beta-15 (PCDHB15) (Homo sapiens (Human)).